We begin with the raw amino-acid sequence, 252 residues long: MEVRPIGWICGQVVKNFSGRLEGLQKAIMDLIDEFKDDLPTILRLSQSSQKTDPVQKTSKVRMALALAKINRGTLIQGLNHISSSSKSVAKLLQPRLAYRLLELRSISHRLLREVNVASQPLHSVQMKRGSLFEIISFPAKTALTSIMYASYAALIYLAVCVNAVLAKIKKIFQEEESIRQNRESENFRKAFSEPALRKPMFSESEIKAKPYRSLPEKPDNLLDQPKPPANKQSNKIQVLHSVFDQLAELNE.

The helical transmembrane segment at 145–167 (TSIMYASYAALIYLAVCVNAVLA) threads the bilayer. Over residues 208-221 (KAKPYRSLPEKPDN) the composition is skewed to basic and acidic residues. Residues 208–235 (KAKPYRSLPEKPDNLLDQPKPPANKQSN) form a disordered region.

It localises to the membrane. May play at role in testicular development/spermatogenesis and may be an important factor in male infertility. This Mus musculus (Mouse) protein is Spermatogenesis-associated protein 9 (Spata9).